Here is a 92-residue protein sequence, read N- to C-terminus: Small ribosomal subunit protein uS19 (92 aa).

Belongs to the universal ribosomal protein uS19 family.

Its function is as follows. Protein S19 forms a complex with S13 that binds strongly to the 16S ribosomal RNA. This chain is Small ribosomal subunit protein uS19, found in Parvibaculum lavamentivorans (strain DS-1 / DSM 13023 / NCIMB 13966).